The chain runs to 329 residues: 4-hydroxythreonine-4-phosphate dehydrogenase (329 aa).

His136 and Thr137 together coordinate substrate. A divalent metal cation contacts are provided by His166, His211, and His266. Residues Lys274, Asn283, and Arg292 each coordinate substrate.

The protein belongs to the PdxA family. In terms of assembly, homodimer. It depends on Zn(2+) as a cofactor. Mg(2+) is required as a cofactor. Co(2+) serves as cofactor.

The protein resides in the cytoplasm. The enzyme catalyses 4-(phosphooxy)-L-threonine + NAD(+) = 3-amino-2-oxopropyl phosphate + CO2 + NADH. The protein operates within cofactor biosynthesis; pyridoxine 5'-phosphate biosynthesis; pyridoxine 5'-phosphate from D-erythrose 4-phosphate: step 4/5. Catalyzes the NAD(P)-dependent oxidation of 4-(phosphooxy)-L-threonine (HTP) into 2-amino-3-oxo-4-(phosphooxy)butyric acid which spontaneously decarboxylates to form 3-amino-2-oxopropyl phosphate (AHAP). The protein is 4-hydroxythreonine-4-phosphate dehydrogenase of Escherichia coli O139:H28 (strain E24377A / ETEC).